The following is a 330-amino-acid chain: Aspartate--ammonia ligase (330 aa).

This sequence belongs to the class-II aminoacyl-tRNA synthetase family. AsnA subfamily.

It localises to the cytoplasm. The catalysed reaction is L-aspartate + NH4(+) + ATP = L-asparagine + AMP + diphosphate + H(+). It participates in amino-acid biosynthesis; L-asparagine biosynthesis; L-asparagine from L-aspartate (ammonia route): step 1/1. In Klebsiella pneumoniae subsp. pneumoniae (strain ATCC 700721 / MGH 78578), this protein is Aspartate--ammonia ligase.